A 325-amino-acid chain; its full sequence is Holliday junction branch migration complex subunit RuvB (325 aa).

A large ATPase domain (RuvB-L) region spans residues 1-181 (MENRLINPVE…FGIVQRLEFY (181 aa)). ATP is bound by residues isoleucine 20, arginine 21, glycine 62, lysine 65, threonine 66, threonine 67, 128-130 (EDF), arginine 171, tyrosine 181, and arginine 218. Threonine 66 provides a ligand contact to Mg(2+). The segment at 182–252 (NIEDLTTIVS…IADSALDMLA (71 aa)) is small ATPAse domain (RuvB-S). The head domain (RuvB-H) stretch occupies residues 255-325 (RRGLDHLDRR…VLTQMAIDQL (71 aa)). Arginine 291, arginine 310, and arginine 315 together coordinate DNA.

Belongs to the RuvB family. As to quaternary structure, homohexamer. Forms an RuvA(8)-RuvB(12)-Holliday junction (HJ) complex. HJ DNA is sandwiched between 2 RuvA tetramers; dsDNA enters through RuvA and exits via RuvB. An RuvB hexamer assembles on each DNA strand where it exits the tetramer. Each RuvB hexamer is contacted by two RuvA subunits (via domain III) on 2 adjacent RuvB subunits; this complex drives branch migration. In the full resolvosome a probable DNA-RuvA(4)-RuvB(12)-RuvC(2) complex forms which resolves the HJ.

It is found in the cytoplasm. The catalysed reaction is ATP + H2O = ADP + phosphate + H(+). The RuvA-RuvB-RuvC complex processes Holliday junction (HJ) DNA during genetic recombination and DNA repair, while the RuvA-RuvB complex plays an important role in the rescue of blocked DNA replication forks via replication fork reversal (RFR). RuvA specifically binds to HJ cruciform DNA, conferring on it an open structure. The RuvB hexamer acts as an ATP-dependent pump, pulling dsDNA into and through the RuvAB complex. RuvB forms 2 homohexamers on either side of HJ DNA bound by 1 or 2 RuvA tetramers; 4 subunits per hexamer contact DNA at a time. Coordinated motions by a converter formed by DNA-disengaged RuvB subunits stimulates ATP hydrolysis and nucleotide exchange. Immobilization of the converter enables RuvB to convert the ATP-contained energy into a lever motion, pulling 2 nucleotides of DNA out of the RuvA tetramer per ATP hydrolyzed, thus driving DNA branch migration. The RuvB motors rotate together with the DNA substrate, which together with the progressing nucleotide cycle form the mechanistic basis for DNA recombination by continuous HJ branch migration. Branch migration allows RuvC to scan DNA until it finds its consensus sequence, where it cleaves and resolves cruciform DNA. In Psychrobacter sp. (strain PRwf-1), this protein is Holliday junction branch migration complex subunit RuvB.